Consider the following 351-residue polypeptide: c-di-GMP synthase (351 aa).

Belongs to the CD-NTase family. E05 subfamily.

It carries out the reaction 2 GTP = 3',3'-c-di-GMP + 2 diphosphate. Its function is as follows. Cyclic nucleotide synthase (second messenger synthase) of a CBASS antivirus system. CBASS (cyclic oligonucleotide-based antiphage signaling system) provides immunity against bacteriophage. The CD-NTase protein synthesizes cyclic nucleotides in response to infection; these serve as specific second messenger signals. The signals activate a diverse range of effectors, leading to bacterial cell death and thus abortive phage infection. A type I-D(GG) CBASS system. In terms of biological role, cyclic dinucleotide synthase that catalyzes the synthesis of c-di-GMP, has no activity with other NTP substrates. The protein is c-di-GMP synthase (cdnE) of Capnocytophaga granulosa (strain ATCC 51502 / DSM 11449 / JCM 8566 / LMG 16022 / NCTC 12948 / B0611).